The sequence spans 540 residues: Transcription initiation factor IIF subunit alpha (540 aa).

The segment covering 1 to 26 has biased composition (basic and acidic residues); that stretch reads MDSQETKVFENVKQENPDEKKPKVEE. Disordered regions lie at residues 1 to 39 and 70 to 106; these read MDSQ…QSQQ and IDPS…SSSN. Polar residues-rich tracts occupy residues 29–39 and 89–106; these read SQNNASTQSQQ and APSS…SSSN. A phosphoserine mark is found at serine 259 and serine 261. Residues 280–382 adopt a coiled-coil conformation; sequence MEGNEEDNKK…REEKLKSRFS (103 aa). Positions 341-416 are disordered; it reads YESDEEDEDP…SSQLQSPNTS (76 aa). The segment covering 359–369 has biased composition (acidic residues); it reads SEEEVLQEEEE. The segment covering 381-416 has biased composition (polar residues); sequence FSANASKTNTPRPLERTPSSVSPVKASSQLQSPNTS. At serine 399 the chain carries Phosphoserine.

This sequence belongs to the TFIIF alpha subunit family. As to quaternary structure, component of the fcp1/TFIIF/polII complex via interaction of tfg3 with both tfg1/TFIIF-alpha and tfg2/TFIIF-beta subunits.

It localises to the nucleus. Functionally, TFIIF is a general transcription initiation factor that binds to RNA polymerase II and helps to recruit it to the initiation complex in collaboration with TFIIB. It promotes transcription elongation. The sequence is that of Transcription initiation factor IIF subunit alpha (tfg1) from Schizosaccharomyces pombe (strain 972 / ATCC 24843) (Fission yeast).